Here is a 185-residue protein sequence, read N- to C-terminus: Ribosome-recycling factor (185 aa).

This sequence belongs to the RRF family.

Its subcellular location is the cytoplasm. In terms of biological role, responsible for the release of ribosomes from messenger RNA at the termination of protein biosynthesis. May increase the efficiency of translation by recycling ribosomes from one round of translation to another. This chain is Ribosome-recycling factor, found in Aliivibrio salmonicida (strain LFI1238) (Vibrio salmonicida (strain LFI1238)).